The chain runs to 77 residues: Large ribosomal subunit protein uL24 (77 aa).

It belongs to the universal ribosomal protein uL24 family. Part of the 50S ribosomal subunit.

In terms of biological role, one of two assembly initiator proteins, it binds directly to the 5'-end of the 23S rRNA, where it nucleates assembly of the 50S subunit. One of the proteins that surrounds the polypeptide exit tunnel on the outside of the subunit. This is Large ribosomal subunit protein uL24 from Campylobacter fetus subsp. fetus (strain 82-40).